The sequence spans 217 residues: Phosphoribosylformylglycinamidine synthase subunit PurQ (217 aa).

One can recognise a Glutamine amidotransferase type-1 domain in the interval 2–217 (SIGVLVFPGS…GRVLLQGLLS (216 aa)). The Nucleophile role is filled by Cys86. Catalysis depends on residues His194 and Glu196.

Part of the FGAM synthase complex composed of 1 PurL, 1 PurQ and 2 PurS subunits.

The protein localises to the cytoplasm. The catalysed reaction is N(2)-formyl-N(1)-(5-phospho-beta-D-ribosyl)glycinamide + L-glutamine + ATP + H2O = 2-formamido-N(1)-(5-O-phospho-beta-D-ribosyl)acetamidine + L-glutamate + ADP + phosphate + H(+). It catalyses the reaction L-glutamine + H2O = L-glutamate + NH4(+). It participates in purine metabolism; IMP biosynthesis via de novo pathway; 5-amino-1-(5-phospho-D-ribosyl)imidazole from N(2)-formyl-N(1)-(5-phospho-D-ribosyl)glycinamide: step 1/2. Its function is as follows. Part of the phosphoribosylformylglycinamidine synthase complex involved in the purines biosynthetic pathway. Catalyzes the ATP-dependent conversion of formylglycinamide ribonucleotide (FGAR) and glutamine to yield formylglycinamidine ribonucleotide (FGAM) and glutamate. The FGAM synthase complex is composed of three subunits. PurQ produces an ammonia molecule by converting glutamine to glutamate. PurL transfers the ammonia molecule to FGAR to form FGAM in an ATP-dependent manner. PurS interacts with PurQ and PurL and is thought to assist in the transfer of the ammonia molecule from PurQ to PurL. This is Phosphoribosylformylglycinamidine synthase subunit PurQ from Parasynechococcus marenigrum (strain WH8102).